The primary structure comprises 154 residues: 6,7-dimethyl-8-ribityllumazine synthase (154 aa).

5-amino-6-(D-ribitylamino)uracil-binding positions include Phe22, 56–58, and 80–82; these read AFE and AVI. 85–86 serves as a coordination point for (2S)-2-hydroxy-3-oxobutyl phosphate; that stretch reads AT. His88 acts as the Proton donor in catalysis. Phe113 provides a ligand contact to 5-amino-6-(D-ribitylamino)uracil. Arg127 is a (2S)-2-hydroxy-3-oxobutyl phosphate binding site.

It belongs to the DMRL synthase family. As to quaternary structure, forms an icosahedral capsid composed of 60 subunits, arranged as a dodecamer of pentamers.

It carries out the reaction (2S)-2-hydroxy-3-oxobutyl phosphate + 5-amino-6-(D-ribitylamino)uracil = 6,7-dimethyl-8-(1-D-ribityl)lumazine + phosphate + 2 H2O + H(+). It functions in the pathway cofactor biosynthesis; riboflavin biosynthesis; riboflavin from 2-hydroxy-3-oxobutyl phosphate and 5-amino-6-(D-ribitylamino)uracil: step 1/2. Catalyzes the formation of 6,7-dimethyl-8-ribityllumazine by condensation of 5-amino-6-(D-ribitylamino)uracil with 3,4-dihydroxy-2-butanone 4-phosphate. This is the penultimate step in the biosynthesis of riboflavin. The protein is 6,7-dimethyl-8-ribityllumazine synthase of Geobacillus sp. (strain WCH70).